The following is a 126-amino-acid chain: S-adenosylmethionine decarboxylase proenzyme (126 aa).

Serine 63 (schiff-base intermediate with substrate; via pyruvic acid) is an active-site residue. At serine 63 the chain carries Pyruvic acid (Ser); by autocatalysis. Histidine 68 acts as the Proton acceptor; for processing activity in catalysis. Residue cysteine 83 is the Proton donor; for catalytic activity of the active site.

The protein belongs to the prokaryotic AdoMetDC family. Type 1 subfamily. Heterotetramer of two alpha and two beta chains arranged as a dimer of alpha/beta heterodimers. Pyruvate serves as cofactor. In terms of processing, is synthesized initially as an inactive proenzyme. Formation of the active enzyme involves a self-maturation process in which the active site pyruvoyl group is generated from an internal serine residue via an autocatalytic post-translational modification. Two non-identical subunits are generated from the proenzyme in this reaction, and the pyruvate is formed at the N-terminus of the alpha chain, which is derived from the carboxyl end of the proenzyme. The post-translation cleavage follows an unusual pathway, termed non-hydrolytic serinolysis, in which the side chain hydroxyl group of the serine supplies its oxygen atom to form the C-terminus of the beta chain, while the remainder of the serine residue undergoes an oxidative deamination to produce ammonia and the pyruvoyl group blocking the N-terminus of the alpha chain.

It catalyses the reaction S-adenosyl-L-methionine + H(+) = S-adenosyl 3-(methylsulfanyl)propylamine + CO2. Its pathway is amine and polyamine biosynthesis; S-adenosylmethioninamine biosynthesis; S-adenosylmethioninamine from S-adenosyl-L-methionine: step 1/1. In terms of biological role, catalyzes the decarboxylation of S-adenosylmethionine to S-adenosylmethioninamine (dcAdoMet), the propylamine donor required for the synthesis of the polyamines spermine and spermidine from the diamine putrescine. The sequence is that of S-adenosylmethionine decarboxylase proenzyme from Syntrophomonas wolfei subsp. wolfei (strain DSM 2245B / Goettingen).